A 309-amino-acid polypeptide reads, in one-letter code: Thioesterase lcsJ (309 aa).

The chain crosses the membrane as a helical span at residues 11-31 (IAQVHGFVFSWWGVILLLAII). A disordered region spans residues 61–83 (ASPTAENAQRRVPKTPKTGATDT). N112 carries N-linked (GlcNAc...) asparagine glycosylation. The segment at 239–275 (SGWIPPRPESTGNSKSLDSLQANGHGATENGKHDAKD) is disordered. The segment covering 248–260 (STGNSKSLDSLQA) has biased composition (polar residues).

This sequence belongs to the lcsJ thioesterase family.

The protein resides in the membrane. Its pathway is secondary metabolite biosynthesis. In terms of biological role, thioesterase; part of the gene cluster that mediates the biosynthesis of the lipopeptide antibiotics leucinostatins that show extensive biological activities, including antimalarial, antiviral, antibacterial, antifungal, and antitumor activities, as well as phytotoxic. Leucinostatin A contains nine amino acid residues, including the unusual amino acid 4-methyl-L-proline (MePro), 2-amino-6-hydroxy-4-methyl-8-oxodecanoic acid (AHyMeOA), 3-hydroxyleucine (HyLeu), alpha-aminoisobutyric acid (AIB), beta-Ala, a 4-methylhex-2-enoic acid at the N-terminus as well as a N1,N1-dimethylpropane-1,2-diamine (DPD) at the C-terminus. The biosynthesis of leucinostatins is probably initiated with the assembly of 4-methylhex-2-enoic acid by a reducing PKS. Two reducing polyketide synthases, lcsB and lcsC, have been identified in the cluster and it is not clear which is the one that assembles 4-methylhex-2-enoic acid since both contain KS, AT, DH, cMT, ER, KR and ACP domains. The polyketide residue might be transferred to the NRPS lcsA, mediated by two additional enzymes, the acyl-CoA ligase lcsD and the thioesterase lcsE. The linear polyketide carboxylic acid, which is released from PKS, is converted to a CoA thioester by lcsD, and then lcsE hydrolyzes the thiol bond and shuttles the polyketide intermediate to lcsA. The C domain of the first module catalyzed the condensation of 4-methylhex-2-enoic acid and MePro carried by domain A1, followed by successive condensations of nine amino acids to trigger the elongation of the linear peptide. A5 and A6 domains of lcsA are proposed to incorporate leucine, A2 AHyMeOA, and A3 incorporates HyLeu. A4, A7 and A8 incorporate AIB. The AHyMeOA in leucinostatin A activated by the A2 might be produced by the second PKS (lcsB or lcsC) present within the cluster. The MePro is probably produced via leucine cyclization and may originate from a separate pathway, independent of the cluster. Another nonproteinogenic amino acid, beta-Ala, could be produced by an aspartic acid decarboxylase also localized outside of the cluster. Two candidates are VFPBJ_01400 and VFPBJ_10476. The final peptide scaffold may be released by the NAD(P)H-dependent thioester reductase (TE) at the C-terminal region of lcsA. Transamination of the lcsA product by the transaminase lcsP may produce DPD at the C-terminus. Further hydroxylation steps performed alternatively by the cytochrome P450 monooxygenases lcsI, lcsK and lcsN then yield the non-methylated leucinostatins precursor. It is also possible that leucines can be hydroxylated prior to their incorporation into the peptide. Varying extents of methylation then lead to the formation of leucinostatins A and B. This is Thioesterase lcsJ from Purpureocillium lilacinum (Paecilomyces lilacinus).